The chain runs to 268 residues: Energy-coupling factor transporter transmembrane protein EcfT (268 aa).

5 consecutive transmembrane segments (helical) span residues 28-48, 63-83, 107-127, 152-172, and 248-268; these read FVFL…YLWV, LWFL…TLMM, ILEG…ATIM, LPVH…PTLM, and ISLT…YSGV.

This sequence belongs to the energy-coupling factor EcfT family. In terms of assembly, forms a stable energy-coupling factor (ECF) transporter complex composed of 2 membrane-embedded substrate-binding proteins (S component), 2 ATP-binding proteins (A component) and 2 transmembrane proteins (T component). May be able to interact with more than 1 S component at a time.

It localises to the cell membrane. Functionally, transmembrane (T) component of an energy-coupling factor (ECF) ABC-transporter complex. Unlike classic ABC transporters this ECF transporter provides the energy necessary to transport a number of different substrates. The protein is Energy-coupling factor transporter transmembrane protein EcfT of Staphylococcus aureus (strain 04-02981).